A 183-amino-acid polypeptide reads, in one-letter code: Gamma-crystallin N-A (183 aa).

Beta/gamma crystallin 'Greek key' domains follow at residues 6-46 (GKIV…RVES), 47-89 (GAWV…KPIK), 95-136 (YRME…KVYG), and 138-180 (GAWA…RRVV).

Belongs to the beta/gamma-crystallin family. In terms of assembly, monomer.

Its function is as follows. Crystallins are the dominant structural components of the vertebrate eye lens. This chain is Gamma-crystallin N-A (crygna), found in Danio rerio (Zebrafish).